The primary structure comprises 279 residues: Tryptophan synthase alpha chain (279 aa).

Residues Glu-50 and Asp-61 each act as proton acceptor in the active site.

Belongs to the TrpA family. Tetramer of two alpha and two beta chains.

It carries out the reaction (1S,2R)-1-C-(indol-3-yl)glycerol 3-phosphate + L-serine = D-glyceraldehyde 3-phosphate + L-tryptophan + H2O. The protein operates within amino-acid biosynthesis; L-tryptophan biosynthesis; L-tryptophan from chorismate: step 5/5. Functionally, the alpha subunit is responsible for the aldol cleavage of indoleglycerol phosphate to indole and glyceraldehyde 3-phosphate. This is Tryptophan synthase alpha chain from Brucella abortus (strain S19).